Here is a 320-residue protein sequence, read N- to C-terminus: Nodulation efficiency protein NfeD (320 aa).

This sequence belongs to the ornithine cyclodeaminase/mu-crystallin family.

Functionally, seems to be involved in the nodulation efficiency of R.meliloti GR4 on alfalfa roots. In Rhizobium meliloti (Ensifer meliloti), this protein is Nodulation efficiency protein NfeD.